The chain runs to 220 residues: Cysteine-rich venom protein (220 aa).

The 128-residue stretch at 20–147 (DLHNSLRRSV…AYKYFYVCQY (128 aa)) folds into the SCP domain. 8 cysteine pairs are disulfide-bonded: C56–C134, C73–C148, C129–C145, C167–C174, C170–C179, C183–C215, C192–C209, and C200–C213. A ShKT domain is found at 183–215 (CTREDEFINCNDLVKQGCQTDYLKSNCAASCFC).

As to expression, expressed by the venom gland.

It is found in the secreted. Blocks contraction of smooth muscle elicited by high potassium-induced depolarization, but does not block caffeine-stimulated contraction. May target voltage-gated calcium channels in smooth muscle. The sequence is that of Cysteine-rich venom protein from Echis coloratus (Carpet viper).